The chain runs to 436 residues: Zinc finger protein 101 (436 aa).

One can recognise a KRAB domain in the interval 4–82 (VAFEDVAVNF…RKEGNEHRET (79 aa)). The C2H2-type 1 zinc-finger motif lies at 102-124 (CKCSVCGKVFLRHSFLDRHMRAH). Over residues 128-141 (KRSECGGEWRETPR) the composition is skewed to basic and acidic residues. A disordered region spans residues 128–164 (KRSECGGEWRETPRKQKQHGKASISPSSGARRTVTPT). A compositionally biased stretch (polar residues) spans 151-163 (ISPSSGARRTVTP). The segment at 169 to 191 (YECKVCGKAFNSPNLFQIHQRTH) adopts a C2H2-type 2 zinc-finger fold. The segment at 197-219 (YKCREIVRAFTVSSFFRKHGKMH) adopts a C2H2-type 3; degenerate zinc-finger fold. 7 consecutive C2H2-type zinc fingers follow at residues 225 to 247 (YECK…VRTH), 253 to 276 (YKCK…IRSH), 282 to 304 (HQCQ…ERTH), 310 to 332 (YECQ…ERAH), 338 to 360 (YECN…KKTH), 366 to 388 (YECT…EMTH), and 394 to 416 (FDCK…ERTH).

It belongs to the krueppel C2H2-type zinc-finger protein family. As to expression, expressed in a variety of adult and fetal tissues.

The protein resides in the nucleus. Functionally, may be involved in transcriptional regulation. This is Zinc finger protein 101 (ZNF101) from Homo sapiens (Human).